The chain runs to 271 residues: Shikimate dehydrogenase-like protein HI_0607 (271 aa).

The Proton donor/acceptor role is filled by Lys67. Asp103 lines the substrate pocket. NADP(+) contacts are provided by residues 126–130 (GSGGM), Lys154, and Ser184.

Belongs to the shikimate dehydrogenase-like family. In terms of assembly, homodimer.

It carries out the reaction shikimate + NADP(+) = 3-dehydroshikimate + NADPH + H(+). Functionally, in vitro, is able to catalyze the NADP(+)-dependent oxidation of shikimate to 3-dehydroshikimate. However, has much lower activity than classical shikimate dehydrogenases AroE, indicating that shikimate may not be the biological substrate. Cannot utilize NAD(+) instead of NADP(+). Is not able to catalyze the oxidation of quinate. The polypeptide is Shikimate dehydrogenase-like protein HI_0607 (Haemophilus influenzae (strain ATCC 51907 / DSM 11121 / KW20 / Rd)).